A 204-amino-acid chain; its full sequence is Nascent polypeptide-associated complex subunit alpha (204 aa).

Over residues 1–19 (MADPRVEELPDEEVPKANV) the composition is skewed to basic and acidic residues. 2 disordered regions span residues 1–47 (MADP…IHSR) and 118–167 (QLAA…GLEA). Over residues 22–32 (AGSDSESEAGE) the composition is skewed to acidic residues. The region spanning 46 to 111 (SRNEKKARKA…AKIEDLNSQA (66 aa)) is the NAC-A/B domain. Positions 118–128 (QLAAAEAAAGE) are enriched in low complexity. A compositionally biased stretch (basic and acidic residues) spans 129–151 (HAGHDHDHDHGKGKAPETEAKKE). Acidic residues predominate over residues 152 to 164 (EEEDDGEEVDETG). Positions 165–204 (LEAKDIELVMAQANVSRKKAVKALRENDNDIVNSIMALSI) constitute a UBA domain.

This sequence belongs to the NAC-alpha family. As to quaternary structure, part of the nascent polypeptide-associated complex (NAC), consisting of egd2 and egd1. NAC associates with ribosomes via egd1.

Its subcellular location is the cytoplasm. It localises to the nucleus. Component of the nascent polypeptide-associated complex (NAC), a dynamic component of the ribosomal exit tunnel, protecting the emerging polypeptides from interaction with other cytoplasmic proteins to ensure appropriate nascent protein targeting. The NAC complex also promotes mitochondrial protein import by enhancing productive ribosome interactions with the outer mitochondrial membrane and blocks the inappropriate interaction of ribosomes translating non-secretory nascent polypeptides with translocation sites in the membrane of the endoplasmic reticulum. Egd2 may also be involved in transcription regulation. The chain is Nascent polypeptide-associated complex subunit alpha (egd2) from Aspergillus fumigatus (strain ATCC MYA-4609 / CBS 101355 / FGSC A1100 / Af293) (Neosartorya fumigata).